We begin with the raw amino-acid sequence, 217 residues long: MHNRKRKTVKKTVSFSDDQNLTNANLNNHRKGHIDDDTPPVYVRKSWTLIPFHLLALLYWFLKYTDFNLLALLYIMIPTQVIYLIFRFNKNTIYGKKRLRLNWLLVFITLGACLLLSIPCLAIIVLFGAPFVELLKESWLLALHCCFLTYPAVYDVFNCNFKVGYFKKYFISVVIGCWISCFVIPLDWDRDWQAWPVPLIVGAYLGSFIGFSIGGYI.

A glycan (N-linked (GlcNAc...) asparagine) is linked at asparagine 20. The next 6 helical transmembrane spans lie at 41-61, 66-86, 107-127, 139-159, 169-189, and 197-217; these read VYVR…LYWF, DFNL…YLIF, FITL…IVLF, WLLA…VFNC, YFIS…LDWD, and VPLI…GGYI.

Belongs to the PIGF family.

It localises to the endoplasmic reticulum membrane. It functions in the pathway glycolipid biosynthesis; glycosylphosphatidylinositol-anchor biosynthesis. Functionally, acts in the GPI biosynthetic pathway between GlcNAc-PI synthesis and GPI transfer to protein. This Kluyveromyces lactis (strain ATCC 8585 / CBS 2359 / DSM 70799 / NBRC 1267 / NRRL Y-1140 / WM37) (Yeast) protein is Glycosylphosphatidylinositol anchor biosynthesis protein 11 (GPI11).